Reading from the N-terminus, the 263-residue chain is Phosphatidylglycerol--prolipoprotein diacylglyceryl transferase (263 aa).

The next 4 membrane-spanning stretches (helical) occupy residues V10–F30, M56–Y76, I91–L111, and G117–F137. R139 is an a 1,2-diacyl-sn-glycero-3-phospho-(1'-sn-glycerol) binding site. 3 helical membrane-spanning segments follow: residues P171–F191, G199–V219, and F231–L251.

Belongs to the Lgt family.

The protein resides in the cell inner membrane. The catalysed reaction is L-cysteinyl-[prolipoprotein] + a 1,2-diacyl-sn-glycero-3-phospho-(1'-sn-glycerol) = an S-1,2-diacyl-sn-glyceryl-L-cysteinyl-[prolipoprotein] + sn-glycerol 1-phosphate + H(+). It functions in the pathway protein modification; lipoprotein biosynthesis (diacylglyceryl transfer). Functionally, catalyzes the transfer of the diacylglyceryl group from phosphatidylglycerol to the sulfhydryl group of the N-terminal cysteine of a prolipoprotein, the first step in the formation of mature lipoproteins. The polypeptide is Phosphatidylglycerol--prolipoprotein diacylglyceryl transferase (Nitratidesulfovibrio vulgaris (strain DP4) (Desulfovibrio vulgaris)).